The chain runs to 109 residues: Small ribosomal subunit protein uS17 (109 aa).

The protein belongs to the universal ribosomal protein uS17 family. In terms of assembly, part of the 30S ribosomal subunit.

In terms of biological role, one of the primary rRNA binding proteins, it binds specifically to the 5'-end of 16S ribosomal RNA. The polypeptide is Small ribosomal subunit protein uS17 (Methanococcus vannielii).